We begin with the raw amino-acid sequence, 387 residues long: Phosphoglycerate kinase (387 aa).

Substrate is bound by residues 21-23 (DLN), Arg-36, 59-62 (HLGR), Arg-113, and Arg-146. ATP is bound by residues Lys-197, Glu-314, and 340-343 (GGDT).

It belongs to the phosphoglycerate kinase family. In terms of assembly, monomer.

Its subcellular location is the cytoplasm. The catalysed reaction is (2R)-3-phosphoglycerate + ATP = (2R)-3-phospho-glyceroyl phosphate + ADP. Its pathway is carbohydrate degradation; glycolysis; pyruvate from D-glyceraldehyde 3-phosphate: step 2/5. In Aeromonas hydrophila subsp. hydrophila (strain ATCC 7966 / DSM 30187 / BCRC 13018 / CCUG 14551 / JCM 1027 / KCTC 2358 / NCIMB 9240 / NCTC 8049), this protein is Phosphoglycerate kinase.